Here is a 601-residue protein sequence, read N- to C-terminus: Elongation factor 4 (601 aa).

The region spanning 4–186 (SFIRNFAIIA…SIVHLVPPPK (183 aa)) is the tr-type G domain. GTP contacts are provided by residues 16-21 (DHGKST) and 133-136 (NKID).

The protein belongs to the TRAFAC class translation factor GTPase superfamily. Classic translation factor GTPase family. LepA subfamily.

The protein resides in the cell inner membrane. The enzyme catalyses GTP + H2O = GDP + phosphate + H(+). In terms of biological role, required for accurate and efficient protein synthesis under certain stress conditions. May act as a fidelity factor of the translation reaction, by catalyzing a one-codon backward translocation of tRNAs on improperly translocated ribosomes. Back-translocation proceeds from a post-translocation (POST) complex to a pre-translocation (PRE) complex, thus giving elongation factor G a second chance to translocate the tRNAs correctly. Binds to ribosomes in a GTP-dependent manner. The polypeptide is Elongation factor 4 (Koribacter versatilis (strain Ellin345)).